The sequence spans 416 residues: Serine hydroxymethyltransferase 1 (416 aa).

Residues leucine 121 and glycine 125 to leucine 127 each bind (6S)-5,6,7,8-tetrahydrofolate. Lysine 229 bears the N6-(pyridoxal phosphate)lysine mark. (6S)-5,6,7,8-tetrahydrofolate-binding positions include glutamate 245 and serine 354–phenylalanine 356.

The protein belongs to the SHMT family. As to quaternary structure, homodimer. Pyridoxal 5'-phosphate is required as a cofactor.

It localises to the cytoplasm. The enzyme catalyses (6R)-5,10-methylene-5,6,7,8-tetrahydrofolate + glycine + H2O = (6S)-5,6,7,8-tetrahydrofolate + L-serine. It participates in one-carbon metabolism; tetrahydrofolate interconversion. The protein operates within amino-acid biosynthesis; glycine biosynthesis; glycine from L-serine: step 1/1. Functionally, catalyzes the reversible interconversion of serine and glycine with tetrahydrofolate (THF) serving as the one-carbon carrier. This reaction serves as the major source of one-carbon groups required for the biosynthesis of purines, thymidylate, methionine, and other important biomolecules. Also exhibits THF-independent aldolase activity toward beta-hydroxyamino acids, producing glycine and aldehydes, via a retro-aldol mechanism. The polypeptide is Serine hydroxymethyltransferase 1 (Photobacterium profundum (strain SS9)).